We begin with the raw amino-acid sequence, 174 residues long: NADH-ubiquinone oxidoreductase chain 6 (174 aa).

A run of 5 helical transmembrane segments spans residues 1–21 (MTYVLFTLSVMLVMGFVGFSS), 24–44 (SPIYGGLALVVSGVVGCMIIL), 47–67 (GGAYLGLVMFLIYLGGMMVVF), 86–106 (FEVLACFLVGLMMEVGLVLWV), and 151–171 (WLVVVAGWTLFVGVYVVIEIT).

The protein belongs to the complex I subunit 6 family. As to quaternary structure, core subunit of respiratory chain NADH dehydrogenase (Complex I) which is composed of 45 different subunits.

The protein resides in the mitochondrion inner membrane. The enzyme catalyses a ubiquinone + NADH + 5 H(+)(in) = a ubiquinol + NAD(+) + 4 H(+)(out). Core subunit of the mitochondrial membrane respiratory chain NADH dehydrogenase (Complex I) which catalyzes electron transfer from NADH through the respiratory chain, using ubiquinone as an electron acceptor. Essential for the catalytic activity and assembly of complex I. The polypeptide is NADH-ubiquinone oxidoreductase chain 6 (MT-ND6) (Papio hamadryas (Hamadryas baboon)).